We begin with the raw amino-acid sequence, 400 residues long: Enolase (400 aa).

Gln154 serves as a coordination point for (2R)-2-phosphoglycerate. Residue Glu197 is the Proton donor of the active site. Asp233, Glu274, and Asp301 together coordinate Mg(2+). Lys326, Arg355, Ser356, and Lys377 together coordinate (2R)-2-phosphoglycerate. Lys326 (proton acceptor) is an active-site residue.

The protein belongs to the enolase family. It depends on Mg(2+) as a cofactor.

It is found in the cytoplasm. Its subcellular location is the secreted. It localises to the cell surface. The enzyme catalyses (2R)-2-phosphoglycerate = phosphoenolpyruvate + H2O. The protein operates within carbohydrate degradation; glycolysis; pyruvate from D-glyceraldehyde 3-phosphate: step 4/5. In terms of biological role, catalyzes the reversible conversion of 2-phosphoglycerate (2-PG) into phosphoenolpyruvate (PEP). It is essential for the degradation of carbohydrates via glycolysis. This is Enolase from Picrophilus torridus (strain ATCC 700027 / DSM 9790 / JCM 10055 / NBRC 100828 / KAW 2/3).